The primary structure comprises 182 residues: Ribosome maturation factor RimM (182 aa).

Residues 103–182 form the PRC barrel domain; the sequence is EGDYYWKDLM…SIEVDWDPGF (80 aa).

Belongs to the RimM family. In terms of assembly, binds ribosomal protein uS19.

The protein localises to the cytoplasm. In terms of biological role, an accessory protein needed during the final step in the assembly of 30S ribosomal subunit, possibly for assembly of the head region. Essential for efficient processing of 16S rRNA. May be needed both before and after RbfA during the maturation of 16S rRNA. It has affinity for free ribosomal 30S subunits but not for 70S ribosomes. The chain is Ribosome maturation factor RimM from Escherichia coli O139:H28 (strain E24377A / ETEC).